A 488-amino-acid polypeptide reads, in one-letter code: Probable cytosol aminopeptidase (488 aa).

Residues lysine 253 and aspartate 258 each contribute to the Mn(2+) site. Lysine 265 is an active-site residue. Aspartate 276, aspartate 335, and glutamate 337 together coordinate Mn(2+). Arginine 339 is an active-site residue.

The protein belongs to the peptidase M17 family. Mn(2+) serves as cofactor.

It localises to the cytoplasm. The enzyme catalyses Release of an N-terminal amino acid, Xaa-|-Yaa-, in which Xaa is preferably Leu, but may be other amino acids including Pro although not Arg or Lys, and Yaa may be Pro. Amino acid amides and methyl esters are also readily hydrolyzed, but rates on arylamides are exceedingly low.. It catalyses the reaction Release of an N-terminal amino acid, preferentially leucine, but not glutamic or aspartic acids.. In terms of biological role, presumably involved in the processing and regular turnover of intracellular proteins. Catalyzes the removal of unsubstituted N-terminal amino acids from various peptides. The polypeptide is Probable cytosol aminopeptidase (Dinoroseobacter shibae (strain DSM 16493 / NCIMB 14021 / DFL 12)).